A 143-amino-acid chain; its full sequence is Zinc-containing ferredoxin (143 aa).

The interval 13-60 (PIDEHFLENDKDYPVTGQHNGHDVRAEGMQRLDADGKPYPTKLGIHGT) is N-terminal extension. Zn(2+) is bound by residues His31, His34, and His58. 4Fe-4S ferredoxin-type domains follow at residues 60–89 (THVA…WNLN) and 115–143 (KCDP…KITP). Residues Cys69 and Cys75 each contribute to the [3Fe-4S] cluster site. Cys79 provides a ligand contact to [4Fe-4S] cluster. Residue Asp117 participates in Zn(2+) binding. 3 residues coordinate [4Fe-4S] cluster: Cys124, Cys127, and Cys130. Cys134 is a [3Fe-4S] cluster binding site.

[3Fe-4S] cluster is required as a cofactor. It depends on [4Fe-4S] cluster as a cofactor. The cofactor is Zn(2+).

Its function is as follows. Ferredoxins are iron-sulfur proteins that transfer electrons in a wide variety of metabolic reactions. In Thermoplasma acidophilum (strain ATCC 25905 / DSM 1728 / JCM 9062 / NBRC 15155 / AMRC-C165), this protein is Zinc-containing ferredoxin (zfx).